A 585-amino-acid polypeptide reads, in one-letter code: Vacuolar protein 8 (585 aa).

Gly2 carries N-myristoyl glycine lipidation. 3 S-palmitoyl cysteine lipidation sites follow: Cys4, Cys5, and Cys7. ARM repeat units follow at residues 39 to 76 (NRSDVDFFSNGPLRALSTLVYSENIDLQRSAALAFAEI), 77 to 116 (TEKDVREVNRDVLEPILILLQSADSEVQRAACGALGNLAV), 118 to 157 (TENKILIVEMGGLEPLIRQMMSTNIEVQCNAVGCITNLAT), 159 to 198 (DDNKSKIAKSGALIPLTKLAKSKDIRVQRNATGALLNMTH), 200 to 239 (GENRQELVNAGAVPVLVSLLSNEDADVQYYCTTALSNIAV), 243 to 282 (NRKKLASTEPKLVGQLVHLMDSPSPRVQCQATLALRNLAS), 284 to 323 (SGYQVEIVRAGGLPHLVQLLTCNHQPLVLAAVACIRNISI), 325 to 365 (PLNE…NLAA), and 409 to 448 (DDLKPKLYESHIIDVLIPLTFSENGEVCGNSAAALANLCS). Over residues 531–562 (QIGQTTTTTTTNITNNNTNTNTNTNTTTSTSN) the composition is skewed to low complexity. Residues 531–565 (QIGQTTTTTTTNITNNNTNTNTNTNTTTSTSNEDQ) form a disordered region.

The protein belongs to the beta-catenin family.

The protein resides in the vacuole membrane. Its function is as follows. Functions in both vacuole inheritance and protein targeting from the cytoplasm to vacuole. Vacuole inheritance has a role in the regulation of hyphal cell division. The protein is Vacuolar protein 8 (VAC8) of Candida albicans (strain SC5314 / ATCC MYA-2876) (Yeast).